Reading from the N-terminus, the 469-residue chain is uncharacterized protein (469 aa).

The HTH gntR-type domain occupies 13 to 81 (TPLYEQLYTF…PKIGWFAAEV (69 aa)). The H-T-H motif DNA-binding region spans 41 to 60 (KRRLSSLLDVSTATIERAYE). Position 309 is an N6-(pyridoxal phosphate)lysine (Lys309).

It in the C-terminal section; belongs to the class-I pyridoxal-phosphate-dependent aminotransferase family. Requires pyridoxal 5'-phosphate as cofactor.

This is an uncharacterized protein from Bacillus subtilis (strain 168).